The following is a 329-amino-acid chain: Ankyrin repeat and SOCS box protein 5 (329 aa).

6 ANK repeats span residues 69-98 (ADRS…NVNA), 102-131 (DHIT…NVNA), 135-164 (DGVT…KAQL), 167-196 (CLPS…DVDQ), 200-229 (HLGT…DVQK), and 232-261 (YWDT…DINA). Positions 278 to 329 (MVERILLQHEATPSSLCQLCRLCIRNYIGRPRLHLIPQLQLPTLLQNFLQYR) constitute an SOCS box domain.

The protein belongs to the ankyrin SOCS box (ASB) family. As to expression, expressed in endothelial and smooth muscle cells of collateral arteries as well as in satellite cells.

It participates in protein modification; protein ubiquitination. May be a substrate-recognition component of a SCF-like ECS (Elongin-Cullin-SOCS-box protein) E3 ubiquitin-protein ligase complex which mediates the ubiquitination and subsequent proteasomal degradation of target proteins. May play a role in the initiation of arteriogenesis. The chain is Ankyrin repeat and SOCS box protein 5 (ASB5) from Oryctolagus cuniculus (Rabbit).